We begin with the raw amino-acid sequence, 291 residues long: MEMO1 family protein TON_0132 (291 aa).

The protein belongs to the MEMO1 family.

This is MEMO1 family protein TON_0132 from Thermococcus onnurineus (strain NA1).